A 306-amino-acid chain; its full sequence is D-alanine--D-alanine ligase (306 aa).

Residues 101 to 303 (KYLWQGCGLP…FSQLVARILE (203 aa)) enclose the ATP-grasp domain. Residue 134–189 (IDALGLPLFVKPSREGSSVGISRVNQASELQAALQEAFRFDDEVLVEAFLSGPEYT) participates in ATP binding. Positions 257, 270, and 272 each coordinate Mg(2+).

Belongs to the D-alanine--D-alanine ligase family. The cofactor is Mg(2+). Requires Mn(2+) as cofactor.

Its subcellular location is the cytoplasm. It catalyses the reaction 2 D-alanine + ATP = D-alanyl-D-alanine + ADP + phosphate + H(+). It participates in cell wall biogenesis; peptidoglycan biosynthesis. Functionally, cell wall formation. In Erwinia tasmaniensis (strain DSM 17950 / CFBP 7177 / CIP 109463 / NCPPB 4357 / Et1/99), this protein is D-alanine--D-alanine ligase.